The chain runs to 464 residues: Protein FAM90A20 (464 aa).

Disordered regions lie at residues 16–42, 71–213, 228–247, 254–273, 309–389, and 418–437; these read RAQT…DPRL, ATLG…IPRP, PTHS…ASKT, VRTQ…CPSA, RLGP…HDGA, and EKPG…SEAP. Composition is skewed to basic and acidic residues over residues 74-83 and 97-114; these read GKKEGKENLK and NKDK…DPQR. The span at 180–197 shows a compositional bias: low complexity; the sequence is LASLSPLRKASLSSSSSL.

It belongs to the FAM90 family.

The polypeptide is Protein FAM90A20 (Homo sapiens (Human)).